The primary structure comprises 1732 residues: Lys-gingipain W83 (1732 aa).

An N-terminal signal peptide occupies residues 1–24; sequence MRKLLLLIAASLLGVGLYAQSAKI. Residues 25–228 constitute a propeptide that is removed on maturation; the sequence is KLDAPTTRTT…ETAYKQLFNR (204 aa). Residues Asp-313, Asp-337, Asp-339, Phe-341, and Glu-343 each coordinate Ca(2+). The active-site Proton donor is His-444. The active-site Nucleophile is the Cys-477. Ca(2+)-binding residues include Phe-482 and Glu-491. A disordered region spans residues 965–988; sequence DAPNGTPNPNPNPNPNPGTTLSES. Over residues 970–980 the composition is skewed to pro residues; the sequence is TPNPNPNPNPN. Residues Ser-988, Glu-990, Asp-1001, Asp-1003, Asp-1005, His-1007, Ser-1022, Gly-1024, Asn-1043, Asp-1146, Glu-1147, Asp-1433, Glu-1435, Asp-1446, Asp-1448, Asp-1450, Asn-1452, Ser-1470, Ile-1472, Asn-1490, and Asp-1595 each contribute to the Ca(2+) site.

Belongs to the peptidase C25 family. Post-translationally, proteolytically cleaved into a catalytic subunit and three adhesins. Arg-gingipain is involved in this post-translational processing.

Its subcellular location is the secreted. It carries out the reaction Endopeptidase with strict specificity for lysyl bonds.. Its function is as follows. Cysteine proteinase with a strong preference for substrates with Lys in the P1 position. Hydrolyzes bovine hemoglobin, bovine serum albumin, casein, human placental type I collagen and human IgA and IgG. Disrupts the functions of polymorphonuclear leukocytes. May act as a virulence factor in the development of peridontal disease. Involved in the coaggregation of P.gingivalis with other oral bacteria. Has hemolytic activity; this is mediated by the adhesin domains and does not require the catalytic domain. The chain is Lys-gingipain W83 from Porphyromonas gingivalis (Bacteroides gingivalis).